A 678-amino-acid polypeptide reads, in one-letter code: DNA ligase (678 aa).

Residues 35 to 39 (DSVYD), 84 to 85 (SL), and Glu116 each bind NAD(+). The active-site N6-AMP-lysine intermediate is Lys118. Positions 139, 178, 297, and 321 each coordinate NAD(+). Zn(2+)-binding residues include Cys415, Cys418, Cys433, and Cys438. A BRCT domain is found at 600–678 (DGNQIFAGKT…EAQLLEMLNE (79 aa)).

It belongs to the NAD-dependent DNA ligase family. LigA subfamily. Mg(2+) is required as a cofactor. It depends on Mn(2+) as a cofactor.

The catalysed reaction is NAD(+) + (deoxyribonucleotide)n-3'-hydroxyl + 5'-phospho-(deoxyribonucleotide)m = (deoxyribonucleotide)n+m + AMP + beta-nicotinamide D-nucleotide.. DNA ligase that catalyzes the formation of phosphodiester linkages between 5'-phosphoryl and 3'-hydroxyl groups in double-stranded DNA using NAD as a coenzyme and as the energy source for the reaction. It is essential for DNA replication and repair of damaged DNA. The sequence is that of DNA ligase from Nostoc punctiforme (strain ATCC 29133 / PCC 73102).